Reading from the N-terminus, the 267-residue chain is Alpha-tubulin N-acetyltransferase (267 aa).

The N-acetyltransferase domain occupies 1–197 (MDFRAGLENV…NNFVVYSEFF (197 aa)). Acetyl-CoA is bound by residues 131-144 (FYIH…GYGK) and 167-176 (SMKMIQFLHK).

This sequence belongs to the acetyltransferase ATAT1 family.

It catalyses the reaction L-lysyl-[alpha-tubulin] + acetyl-CoA = N(6)-acetyl-L-lysyl-[alpha-tubulin] + CoA + H(+). Specifically acetylates 'Lys-40' in alpha-tubulin on the lumenal side of microtubules. Promotes microtubule destabilization and accelerates microtubule dynamics; this activity may be independent of acetylation activity. Acetylates alpha-tubulin with a slow enzymatic rate, due to a catalytic site that is not optimized for acetyl transfer. Enters the microtubule through each end and diffuses quickly throughout the lumen of microtubules. Acetylates only long/old microtubules because of its slow acetylation rate since it does not have time to act on dynamically unstable microtubules before the enzyme is released. The chain is Alpha-tubulin N-acetyltransferase from Schistosoma japonicum (Blood fluke).